The primary structure comprises 24 residues: LTNKTARFLVNGTSIPEVDFDVGE.

N-linked (GlcNAc...) asparagine glycosylation is found at Asn-3 and Asn-11.

It belongs to the peptidase S10 family. In terms of assembly, monomer. In terms of processing, contains both N- and O-linked sugar chains. The N-linked oligosaccharides are unique structures of Man(10)GlcNAc(2) and Man(11)GlcNAc(2). Deglycosylation does neither affect catalytic activity, pH, thermal stability, or resistance to proteolysis of the enzyme.

Its subcellular location is the secreted. With respect to regulation, inhibited by DFP. In terms of biological role, removes acidic, neutral and basic amino acids as well as proline from the C-terminal position. Digests preferentially peptides containing a hydrophobic residue in P1' position, as well as arginine, lysine or phenylalanine in P1 position of ester substrate. Catalyzes also peptide synthesis. The protein is Carboxypeptidase 1 of Aspergillus niger.